We begin with the raw amino-acid sequence, 407 residues long: Accessory Sec system protein translocase subunit SecY2 (407 aa).

The next 10 membrane-spanning stretches (helical) occupy residues 13 to 33 (FLWT…TLPF), 65 to 85 (LFSV…MFAV), 104 to 124 (MLLT…NLPL), 133 to 153 (TTIM…LIWL), 158 to 178 (AAMG…AYIP), 190 to 210 (ISSL…YLAV), 248 to 268 (IMYA…IHFL), 287 to 307 (PAWF…FAFI), 345 to 365 (FALV…MVVL), and 370 to 390 (YLRL…VFSI).

This sequence belongs to the SecY/SEC61-alpha family. SecY2 subfamily. In terms of assembly, component of the accessory SecA2/SecY2 protein translocase complex required to export cell wall proteins. May form heterotrimers with SecE and SecG subunits.

Its subcellular location is the cell membrane. In terms of biological role, part of the accessory SecA2/SecY2 system specifically required for export of possible cell wall proteins. The central subunit of a protein translocation channel. The sequence is that of Accessory Sec system protein translocase subunit SecY2 from Streptococcus sanguinis (strain SK36).